A 211-amino-acid polypeptide reads, in one-letter code: NADH-quinone oxidoreductase subunit I (211 aa).

A disordered region spans residues 1–27 (MANTDRPALPHKRAVPPSRADSGPRRR). 2 consecutive 4Fe-4S ferredoxin-type domains span residues 71–101 (LNRYPDGLEKCIGCELCAWACPADAIYVEGA) and 117–146 (RVYQINYLRCIGCGLCIEACPTRALTMTYD). [4Fe-4S] cluster contacts are provided by cysteine 81, cysteine 84, cysteine 87, cysteine 91, cysteine 126, cysteine 129, cysteine 132, and cysteine 136.

It belongs to the complex I 23 kDa subunit family. As to quaternary structure, NDH-1 is composed of 14 different subunits. Subunits NuoA, H, J, K, L, M, N constitute the membrane sector of the complex. [4Fe-4S] cluster serves as cofactor.

The protein localises to the cell membrane. It catalyses the reaction a quinone + NADH + 5 H(+)(in) = a quinol + NAD(+) + 4 H(+)(out). NDH-1 shuttles electrons from NADH, via FMN and iron-sulfur (Fe-S) centers, to quinones in the respiratory chain. The immediate electron acceptor for the enzyme in this species is believed to be menaquinone. Couples the redox reaction to proton translocation (for every two electrons transferred, four hydrogen ions are translocated across the cytoplasmic membrane), and thus conserves the redox energy in a proton gradient. The sequence is that of NADH-quinone oxidoreductase subunit I from Mycobacterium bovis (strain ATCC BAA-935 / AF2122/97).